Here is a 225-residue protein sequence, read N- to C-terminus: Octanoyltransferase (225 aa).

Residues 37 to 217 (SDTPDEFWVV…ELASLIGYQT (181 aa)) enclose the BPL/LPL catalytic domain. Substrate contacts are provided by residues 76 to 83 (RGGQVTYH), 148 to 150 (SLG), and 161 to 163 (GLA). The active-site Acyl-thioester intermediate is C179.

The protein belongs to the LipB family.

It is found in the cytoplasm. It carries out the reaction octanoyl-[ACP] + L-lysyl-[protein] = N(6)-octanoyl-L-lysyl-[protein] + holo-[ACP] + H(+). It functions in the pathway protein modification; protein lipoylation via endogenous pathway; protein N(6)-(lipoyl)lysine from octanoyl-[acyl-carrier-protein]: step 1/2. Its function is as follows. Catalyzes the transfer of endogenously produced octanoic acid from octanoyl-acyl-carrier-protein onto the lipoyl domains of lipoate-dependent enzymes. Lipoyl-ACP can also act as a substrate although octanoyl-ACP is likely to be the physiological substrate. The sequence is that of Octanoyltransferase from Aeromonas salmonicida (strain A449).